The sequence spans 213 residues: Orotate phosphoribosyltransferase (213 aa).

Lys-26 contacts 5-phospho-alpha-D-ribose 1-diphosphate. Phe-34–Phe-35 contributes to the orotate binding site. 5-phospho-alpha-D-ribose 1-diphosphate-binding positions include Tyr-72–Lys-73, Arg-98, Lys-99, Lys-102, His-104, and Asp-123–Ser-131. Residues Ser-127 and Arg-155 each coordinate orotate.

The protein belongs to the purine/pyrimidine phosphoribosyltransferase family. PyrE subfamily. In terms of assembly, homodimer. It depends on Mg(2+) as a cofactor.

It catalyses the reaction orotidine 5'-phosphate + diphosphate = orotate + 5-phospho-alpha-D-ribose 1-diphosphate. It participates in pyrimidine metabolism; UMP biosynthesis via de novo pathway; UMP from orotate: step 1/2. Its function is as follows. Catalyzes the transfer of a ribosyl phosphate group from 5-phosphoribose 1-diphosphate to orotate, leading to the formation of orotidine monophosphate (OMP). In Neisseria meningitidis serogroup A / serotype 4A (strain DSM 15465 / Z2491), this protein is Orotate phosphoribosyltransferase.